The following is a 466-amino-acid chain: Delta-1 crystallin (466 aa).

The protein belongs to the lyase 1 family. Argininosuccinate lyase subfamily. Homotetramer. In terms of tissue distribution, eye lens.

Delta crystallin, the principal crystallin in embryonic lens, is found only in birds and reptiles. Despite possessing the necessary catalytic residues, this protein does not function as an enzymatically active argininosuccinate lyase. This chain is Delta-1 crystallin (ASL1), found in Anas platyrhynchos (Mallard).